The chain runs to 398 residues: O-methyltransferase penC (398 aa).

S-adenosyl-L-methionine is bound at residue D263. The active-site Proton acceptor is the H305.

The protein belongs to the class I-like SAM-binding methyltransferase superfamily. Cation-independent O-methyltransferase family.

It functions in the pathway secondary metabolite biosynthesis. Its pathway is alkaloid biosynthesis. The protein operates within mycotoxin biosynthesis. Functionally, O-methyltransferase; part of the gene cluster that mediates the biosynthesis of penigequinolones, potent insecticidal alkaloids that contain a highly modified 10-carbon prenyl group. The first stage is catalyzed by the nonribosomal peptide synthetase penN that condenses anthranilic acid and O-methyl-L-tyrosine to produce 4'-methoxycyclopeptin. 4'-methoxycyclopeptin is then converted to 4'-methoxydehydrocyclopeptin by the ketoglutarate-dependent dioxygenase penM through dehydrogenation to form a double bond between C-alpha and C-beta of the O-methyltyrosine side chain. PenM also converts its first product methoxydehydrocyclopeptin to 4'-methoxycyclopenin. The following conversion of 4'methoxycyclopenin into 4'-methoxyviridicatin is catalyzed by the cyclopenase penL. 4'-methoxyviridicatin is the precursor of quinolone natural products, and is further converted to quinolinone B. The prenyltransferase penI then catalyzes the canonical Friedel-Crafts alkylation of quinolinone B with dimethylallyl cation to yield dimethylallyl quinolone, which is subjected to FAD-dependent dehydrogenation by the FAD-linked oxidoreductase penH to yield conjugated aryl diene. The delta(3') double bond then serves as the site of the second alkylation with DMAPP catalyzed by the prenyltransferase penG to yield a carbenium ion intermediate, which can be attacked by H(2)O to yield a styrenyl quinolone containing a C3'-hydroxyprenyl chain, or undergo cyclization to yield yaequinolones J1 and J2. The conversion of the styrenyl quinolone into the tetrahydrofuran-containing yaequinolone C is performed by the FAD-dependent monooxygenase penE and involves epoxidation of the terminal C7'-C8' olefin, followed by epoxide ring opening initiated by the C3' hydroxyl group. The predicted cysteine hydrolase penJ acts as an epoxide hydrolase that enhances the rate of the 5-exo-tet cyclization step, increasing the yield of yaequinolone C. PenF catalyzes the cationic rearrangement of the epoxide formed by penE (before ring opening to produce yaequinolone C) into yaequinolone D. Finally, the short-chain dehydrogenase/reductase (SDR)-like reductase penD, catalyzes both the dehydration of yaequinolone D and the reduction of the resulting oxonium to yield penigequinolone. This Penicillium thymicola protein is O-methyltransferase penC.